The chain runs to 491 residues: 1-aminocyclopropane-1-carboxylate synthase (491 aa).

Lys278 is modified (N6-(pyridoxal phosphate)lysine).

Belongs to the class-I pyridoxal-phosphate-dependent aminotransferase family. As to quaternary structure, homodimer. It depends on pyridoxal 5'-phosphate as a cofactor.

It catalyses the reaction S-adenosyl-L-methionine = 1-aminocyclopropane-1-carboxylate + S-methyl-5'-thioadenosine + H(+). It participates in alkene biosynthesis; ethylene biosynthesis via S-adenosyl-L-methionine; ethylene from S-adenosyl-L-methionine: step 1/2. In terms of biological role, catalyzes the formation of 1-aminocyclopropane-1-carboxylate, a direct precursor of ethylene in higher plants. The sequence is that of 1-aminocyclopropane-1-carboxylate synthase (ACS1) from Nicotiana tabacum (Common tobacco).